The primary structure comprises 351 residues: Photosystem II D2 protein (351 aa).

Residues 39–59 (TAYLAIGGWLTGTTFVTSWYT) form a helical membrane-spanning segment. His-116 contributes to the chlorophyll a binding site. A helical membrane pass occupies residues 123–139 (GFMLRQFELARLIGIRP). 2 residues coordinate pheophytin a: Gln-128 and Asn-141. The chain crosses the membrane as a helical span at residues 151-164 (VFVSVFLLYPLGQS). Residue His-196 participates in chlorophyll a binding. A helical membrane pass occupies residues 206 to 226 (GALLSAIHGVTVENTLYEDGE). A plastoquinone-binding residues include His-213 and Phe-260. His-213 contacts Fe cation. His-267 is a binding site for Fe cation. The helical transmembrane segment at 277–293 (GLWTSSIGIIGLALNLR) threads the bilayer.

This sequence belongs to the reaction center PufL/M/PsbA/D family. In terms of assembly, PSII is composed of 1 copy each of membrane proteins PsbA, PsbB, PsbC, PsbD, PsbE, PsbF, PsbH, PsbI, PsbJ, PsbK, PsbL, PsbM, PsbT, PsbX, PsbY, PsbZ, Psb30/Ycf12, peripheral proteins PsbO, CyanoQ (PsbQ), PsbU, PsbV and a large number of cofactors. It forms dimeric complexes. The D1/D2 heterodimer binds P680, chlorophylls that are the primary electron donor of PSII, and subsequent electron acceptors. It shares a non-heme iron and each subunit binds pheophytin, quinone, additional chlorophylls, carotenoids and lipids. There is also a Cl(-1) ion associated with D1 and D2, which is required for oxygen evolution. The PSII complex binds additional chlorophylls, carotenoids and specific lipids. is required as a cofactor.

The protein localises to the host cellular thylakoid membrane. The enzyme catalyses 2 a plastoquinone + 4 hnu + 2 H2O = 2 a plastoquinol + O2. Its function is as follows. Photosystem II (PSII) is a light-driven water:plastoquinone oxidoreductase that uses light energy to abstract electrons from H(2)O, generating O(2) and a proton gradient subsequently used for ATP formation. It consists of a core antenna complex that captures photons, and an electron transfer chain that converts photonic excitation into a charge separation. The D1/D2 (PsbA/PsbD) reaction center heterodimer binds P680, the primary electron donor of PSII as well as several subsequent electron acceptors. D2 is needed for assembly of a stable PSII complex. The protein is Photosystem II D2 protein (psbD) of Synechococcus.